The following is a 358-amino-acid chain: UDP-N-acetylglucosamine--N-acetylmuramyl-(pentapeptide) pyrophosphoryl-undecaprenol N-acetylglucosamine transferase (358 aa).

UDP-N-acetyl-alpha-D-glucosamine contacts are provided by residues threonine 13–glycine 15, asparagine 125, arginine 162, serine 190, isoleucine 244, alanine 263–glutamate 268, and glutamine 289.

Belongs to the glycosyltransferase 28 family. MurG subfamily.

Its subcellular location is the cell inner membrane. The catalysed reaction is di-trans,octa-cis-undecaprenyl diphospho-N-acetyl-alpha-D-muramoyl-L-alanyl-D-glutamyl-meso-2,6-diaminopimeloyl-D-alanyl-D-alanine + UDP-N-acetyl-alpha-D-glucosamine = di-trans,octa-cis-undecaprenyl diphospho-[N-acetyl-alpha-D-glucosaminyl-(1-&gt;4)]-N-acetyl-alpha-D-muramoyl-L-alanyl-D-glutamyl-meso-2,6-diaminopimeloyl-D-alanyl-D-alanine + UDP + H(+). The protein operates within cell wall biogenesis; peptidoglycan biosynthesis. Its function is as follows. Cell wall formation. Catalyzes the transfer of a GlcNAc subunit on undecaprenyl-pyrophosphoryl-MurNAc-pentapeptide (lipid intermediate I) to form undecaprenyl-pyrophosphoryl-MurNAc-(pentapeptide)GlcNAc (lipid intermediate II). The polypeptide is UDP-N-acetylglucosamine--N-acetylmuramyl-(pentapeptide) pyrophosphoryl-undecaprenol N-acetylglucosamine transferase (Halorhodospira halophila (strain DSM 244 / SL1) (Ectothiorhodospira halophila (strain DSM 244 / SL1))).